The sequence spans 81 residues: ATP synthase subunit c, chloroplastic (81 aa).

The next 2 membrane-spanning stretches (helical) occupy residues 7-27 and 57-77; these read AASV…PGVG and LAFM…LLFA.

This sequence belongs to the ATPase C chain family. As to quaternary structure, F-type ATPases have 2 components, F(1) - the catalytic core - and F(0) - the membrane proton channel. F(1) has five subunits: alpha(3), beta(3), gamma(1), delta(1), epsilon(1). F(0) has four main subunits: a(1), b(1), b'(1) and c(10-14). The alpha and beta chains form an alternating ring which encloses part of the gamma chain. F(1) is attached to F(0) by a central stalk formed by the gamma and epsilon chains, while a peripheral stalk is formed by the delta, b and b' chains.

The protein localises to the plastid. It localises to the chloroplast thylakoid membrane. In terms of biological role, f(1)F(0) ATP synthase produces ATP from ADP in the presence of a proton or sodium gradient. F-type ATPases consist of two structural domains, F(1) containing the extramembraneous catalytic core and F(0) containing the membrane proton channel, linked together by a central stalk and a peripheral stalk. During catalysis, ATP synthesis in the catalytic domain of F(1) is coupled via a rotary mechanism of the central stalk subunits to proton translocation. Functionally, key component of the F(0) channel; it plays a direct role in translocation across the membrane. A homomeric c-ring of between 10-14 subunits forms the central stalk rotor element with the F(1) delta and epsilon subunits. The polypeptide is ATP synthase subunit c, chloroplastic (Arabis hirsuta (Hairy rock-cress)).